A 624-amino-acid chain; its full sequence is Chaperone protein HtpG (624 aa).

Residues 1–336 (MKGQETRGFQ…SSDLPLNVSR (336 aa)) form an a; substrate-binding region. Positions 337–552 (EILQDSTVTR…ADEMSTQMAK (216 aa)) are b. Residues 553–624 (LFAAAGQKVP…IRRMNQLLVS (72 aa)) are c.

It belongs to the heat shock protein 90 family. As to quaternary structure, homodimer.

The protein resides in the cytoplasm. In terms of biological role, molecular chaperone. Has ATPase activity. The polypeptide is Chaperone protein HtpG (Shigella boydii serotype 4 (strain Sb227)).